The primary structure comprises 295 residues: MKVLWAALLVTFLAGCQAKVEQPVEPETEPELRQQAEGQSGQPWELALGRFWDYLRWVQTLSEQVQEELLSPQVTQELTTLMDETMKELKAYKSELEEQLSPVAEETRARLSKELQAAQARLGADMEDVRSRLVQYRSEVQAMLGQSTEELRARLASHLRKLRKRLLRDADDLQKRLARLGPLVEQGRVRAATVGSLASQPLQERAQAKLRARMEEMGSRTRDRLDEVKEQVAEVRAKLEEQAQQISLQAEAFQARLKSWFEPLVEDMQRQWAGLVEKVQAAVGASTAPVPSDNH.

Residues 1-18 (MKVLWAALLVTFLAGCQA) form the signal peptide. 6 repeat units span residues 80-101 (TLMD…EQLS), 102-123 (PVAE…ARLG), 124-145 (ADME…AMLG), 146-167 (QSTE…KRLL), 193-211 (TVGS…AKLR), and 212-233 (ARME…EQVA). The interval 80-233 (TLMDETMKEL…RLDEVKEQVA (154 aa)) is 6 X 22 AA approximate tandem repeats. Position 143 is a methionine sulfoxide (Met-143). Phosphoserine is present on Ser-147. An LDL and other lipoprotein receptors binding region spans residues 158-168 (HLRKLRKRLLR). 162–165 (LRKR) is a heparin binding site. The tract at residues 191–268 (AATVGSLASQ…SWFEPLVEDM (78 aa)) is lipid-binding and lipoprotein association. Residues 244–295 (QQISLQAEAFQARLKSWFEPLVEDMQRQWAGLVEKVQAAVGASTAPVPSDNH) are homooligomerization. Residues 256–268 (RLKSWFEPLVEDM) form a specificity for association with VLDL region.

The protein belongs to the apolipoprotein A1/A4/E family. In terms of assembly, homotetramer. May interact with ABCA1; functionally associated with ABCA1 in the biogenesis of HDLs. May interact with APP/A4 amyloid-beta peptide; the interaction is extremely stable in vitro but its physiological significance is unclear. May interact with MAPT. May interact with MAP2. In the cerebrospinal fluid, interacts with secreted SORL1. Interacts with PMEL; this allows the loading of PMEL luminal fragment on ILVs to induce fibril nucleation. APOE exists as multiple glycosylated and sialylated glycoforms within cells and in plasma. The extent of glycosylation and sialylation are tissue and context specific. Post-translationally, glycated in plasma VLDL. In terms of processing, phosphorylated by FAM20C in the extracellular medium.

The protein resides in the secreted. The protein localises to the extracellular space. It localises to the extracellular matrix. It is found in the extracellular vesicle. Its subcellular location is the endosome. The protein resides in the multivesicular body. Its function is as follows. APOE is an apolipoprotein, a protein associating with lipid particles, that mainly functions in lipoprotein-mediated lipid transport between organs via the plasma and interstitial fluids. APOE is a core component of plasma lipoproteins and is involved in their production, conversion and clearance. Apolipoproteins are amphipathic molecules that interact both with lipids of the lipoprotein particle core and the aqueous environment of the plasma. As such, APOE associates with chylomicrons, chylomicron remnants, very low density lipoproteins (VLDL) and intermediate density lipoproteins (IDL) but shows a preferential binding to high-density lipoproteins (HDL). It also binds a wide range of cellular receptors including the LDL receptor/LDLR, the LDL receptor-related proteins LRP1, LRP2 and LRP8 and the very low-density lipoprotein receptor/VLDLR that mediate the cellular uptake of the APOE-containing lipoprotein particles. Finally, APOE also has a heparin-binding activity and binds heparan-sulfate proteoglycans on the surface of cells, a property that supports the capture and the receptor-mediated uptake of APOE-containing lipoproteins by cells. A main function of APOE is to mediate lipoprotein clearance through the uptake of chylomicrons, VLDLs, and HDLs by hepatocytes. APOE is also involved in the biosynthesis by the liver of VLDLs as well as their uptake by peripheral tissues ensuring the delivery of triglycerides and energy storage in muscle, heart and adipose tissues. By participating in the lipoprotein-mediated distribution of lipids among tissues, APOE plays a critical role in plasma and tissues lipid homeostasis. APOE is also involved in two steps of reverse cholesterol transport, the HDLs-mediated transport of cholesterol from peripheral tissues to the liver, and thereby plays an important role in cholesterol homeostasis. First, it is functionally associated with ABCA1 in the biogenesis of HDLs in tissues. Second, it is enriched in circulating HDLs and mediates their uptake by hepatocytes. APOE also plays an important role in lipid transport in the central nervous system, regulating neuron survival and sprouting. The polypeptide is Apolipoprotein E (APOE) (Macaca mulatta (Rhesus macaque)).